A 102-amino-acid polypeptide reads, in one-letter code: NADH-quinone oxidoreductase subunit K (102 aa).

3 helical membrane-spanning segments follow: residues 6-26 (MEHG…GLLI), 30-50 (LLFI…AFVV), and 65-85 (ILVI…LLLL).

The protein belongs to the complex I subunit 4L family. As to quaternary structure, NDH-1 is composed of 14 different subunits. Subunits NuoA, H, J, K, L, M, N constitute the membrane sector of the complex.

It is found in the cell inner membrane. It catalyses the reaction a quinone + NADH + 5 H(+)(in) = a quinol + NAD(+) + 4 H(+)(out). In terms of biological role, NDH-1 shuttles electrons from NADH, via FMN and iron-sulfur (Fe-S) centers, to quinones in the respiratory chain. The immediate electron acceptor for the enzyme in this species is believed to be ubiquinone. Couples the redox reaction to proton translocation (for every two electrons transferred, four hydrogen ions are translocated across the cytoplasmic membrane), and thus conserves the redox energy in a proton gradient. The protein is NADH-quinone oxidoreductase subunit K of Aeromonas hydrophila subsp. hydrophila (strain ATCC 7966 / DSM 30187 / BCRC 13018 / CCUG 14551 / JCM 1027 / KCTC 2358 / NCIMB 9240 / NCTC 8049).